Reading from the N-terminus, the 253-residue chain is Probable transcriptional regulatory protein AM1_1847 (253 aa).

The protein belongs to the TACO1 family.

The protein resides in the cytoplasm. The protein is Probable transcriptional regulatory protein AM1_1847 of Acaryochloris marina (strain MBIC 11017).